A 935-amino-acid polypeptide reads, in one-letter code: Mannosyltransferase regulator 14 (935 aa).

Topologically, residues 1 to 21 (MMLSLRRFSMYVLRSLRLHFK) are cytoplasmic. The helical; Signal-anchor for type II membrane protein transmembrane segment at 22 to 42 (KIIITLLTIQLLFITIFVLGG) threads the bilayer. Topologically, residues 43 to 935 (RSSIIDGNWK…NNIFGSDQKY (893 aa)) are lumenal. Residues 498–500 (DHD) carry the DXD motif.

This sequence belongs to the MNN4 family.

The protein localises to the golgi apparatus membrane. Plays a role in N-glycan mannosylphosphorylation and has partially redundant function with MNN4. The chain is Mannosyltransferase regulator 14 from Saccharomyces cerevisiae (strain ATCC 204508 / S288c) (Baker's yeast).